We begin with the raw amino-acid sequence, 187 residues long: Large ribosomal subunit protein uL10 (187 aa).

Belongs to the universal ribosomal protein uL10 family. As to quaternary structure, part of the ribosomal stalk of the 50S ribosomal subunit. The N-terminus interacts with L11 and the large rRNA to form the base of the stalk. The C-terminus forms an elongated spine to which L12 dimers bind in a sequential fashion forming a multimeric L10(L12)X complex.

In terms of biological role, forms part of the ribosomal stalk, playing a central role in the interaction of the ribosome with GTP-bound translation factors. This is Large ribosomal subunit protein uL10 from Synechococcus sp. (strain JA-2-3B'a(2-13)) (Cyanobacteria bacterium Yellowstone B-Prime).